The chain runs to 84 residues: MMKTVIVLIVFSLVMIVVKSDNGYLLDKYTGCKIWCVINNDSCNSHCIGSGGYYGYCYFWKLACYCQGAPRSELWHYETNRCRA.

The first 20 residues, 1–20, serve as a signal peptide directing secretion; that stretch reads MMKTVIVLIVFSLVMIVVKS. One can recognise an LCN-type CS-alpha/beta domain in the interval 21 to 83; sequence DNGYLLDKYT…LWHYETNRCR (63 aa). Intrachain disulfides connect Cys-32–Cys-82, Cys-36–Cys-57, Cys-43–Cys-64, and Cys-47–Cys-66.

In terms of tissue distribution, expressed by the venom gland.

The protein resides in the secreted. Antimicrobial peptide with activity against both Gram-positive and -negative bacteria. The protein is Antimicrobial peptide MeuNaTxbeta-2 of Mesobuthus eupeus (Lesser Asian scorpion).